Consider the following 429-residue polypeptide: Enolase (429 aa).

Gln-163 contributes to the (2R)-2-phosphoglycerate binding site. Glu-205 (proton donor) is an active-site residue. The Mg(2+) site is built by Asp-242, Glu-286, and Asp-313. Lys-338, Arg-367, Ser-368, and Lys-389 together coordinate (2R)-2-phosphoglycerate. Residue Lys-338 is the Proton acceptor of the active site.

The protein belongs to the enolase family. The cofactor is Mg(2+).

The protein resides in the cytoplasm. It is found in the secreted. It localises to the cell surface. The enzyme catalyses (2R)-2-phosphoglycerate = phosphoenolpyruvate + H2O. It functions in the pathway carbohydrate degradation; glycolysis; pyruvate from D-glyceraldehyde 3-phosphate: step 4/5. Its function is as follows. Catalyzes the reversible conversion of 2-phosphoglycerate (2-PG) into phosphoenolpyruvate (PEP). It is essential for the degradation of carbohydrates via glycolysis. The protein is Enolase of Citrifermentans bemidjiense (strain ATCC BAA-1014 / DSM 16622 / JCM 12645 / Bem) (Geobacter bemidjiensis).